The primary structure comprises 162 residues: Disulfide bond formation protein B (162 aa).

Residues 1–8 are Cytoplasmic-facing; the sequence is MTPLFRKA. A helical membrane pass occupies residues 9-25; the sequence is VWLLFAVSVCAFAGSLA. The Periplasmic segment spans residues 26–43; that stretch reads AQYVLGMEPCVLCISQRL. Cys35 and Cys38 are oxidised to a cystine. The chain crosses the membrane as a helical span at residues 44 to 60; the sequence is CVLATALCAAIVLMCRP. Topologically, residues 61–67 are cytoplasmic; sequence RRKAGGL. A helical membrane pass occupies residues 68–85; the sequence is FGAVFISIPAVTGISVAA. Residues 86-141 are Periplasmic-facing; that stretch reads YQLWLQSLPPGTAPSCGAPWTFRLKGWPLFDWFEPVVRGFGNCAEPDYLLGVALPV. A disulfide bridge connects residues Cys101 and Cys128. The helical transmembrane segment at 142-160 threads the bilayer; the sequence is WSVAYFLAVALTVWWAWAR. The Cytoplasmic segment spans residues 161 to 162; it reads AK.

Belongs to the DsbB family.

It is found in the cell inner membrane. Its function is as follows. Required for disulfide bond formation in some periplasmic proteins. Acts by oxidizing the DsbA protein. This is Disulfide bond formation protein B from Neisseria meningitidis serogroup A / serotype 4A (strain DSM 15465 / Z2491).